A 373-amino-acid chain; its full sequence is Homoserine O-acetyltransferase (373 aa).

The AB hydrolase-1 domain occupies 46–355 (NAILICHPLT…NPNGHDSFLL (310 aa)). Serine 151 serves as the catalytic Nucleophile. Arginine 221 is a substrate binding site. Residues aspartate 317 and histidine 350 contribute to the active site. Residue aspartate 351 coordinates substrate.

The protein belongs to the AB hydrolase superfamily. MetX family. As to quaternary structure, homodimer.

The protein localises to the cytoplasm. It carries out the reaction L-homoserine + acetyl-CoA = O-acetyl-L-homoserine + CoA. Its pathway is amino-acid biosynthesis; L-methionine biosynthesis via de novo pathway; O-acetyl-L-homoserine from L-homoserine: step 1/1. Its function is as follows. Transfers an acetyl group from acetyl-CoA to L-homoserine, forming acetyl-L-homoserine. This Zymomonas mobilis subsp. mobilis (strain ATCC 31821 / ZM4 / CP4) protein is Homoserine O-acetyltransferase.